Reading from the N-terminus, the 574-residue chain is Proline--tRNA ligase (574 aa).

The protein belongs to the class-II aminoacyl-tRNA synthetase family. ProS type 1 subfamily. As to quaternary structure, homodimer.

It is found in the cytoplasm. The catalysed reaction is tRNA(Pro) + L-proline + ATP = L-prolyl-tRNA(Pro) + AMP + diphosphate. Functionally, catalyzes the attachment of proline to tRNA(Pro) in a two-step reaction: proline is first activated by ATP to form Pro-AMP and then transferred to the acceptor end of tRNA(Pro). As ProRS can inadvertently accommodate and process non-cognate amino acids such as alanine and cysteine, to avoid such errors it has two additional distinct editing activities against alanine. One activity is designated as 'pretransfer' editing and involves the tRNA(Pro)-independent hydrolysis of activated Ala-AMP. The other activity is designated 'posttransfer' editing and involves deacylation of mischarged Ala-tRNA(Pro). The misacylated Cys-tRNA(Pro) is not edited by ProRS. This is Proline--tRNA ligase from Aeromonas hydrophila subsp. hydrophila (strain ATCC 7966 / DSM 30187 / BCRC 13018 / CCUG 14551 / JCM 1027 / KCTC 2358 / NCIMB 9240 / NCTC 8049).